The following is a 610-amino-acid chain: Glutamine--fructose-6-phosphate aminotransferase [isomerizing] (610 aa).

Residue C2 is the Nucleophile; for GATase activity of the active site. One can recognise a Glutamine amidotransferase type-2 domain in the interval 2–219 (CGIVGATSER…EGDVADINRT (218 aa)). SIS domains are found at residues 287–427 (AADI…YRGM) and 459–600 (LAQD…VDQP). K605 serves as the catalytic For Fru-6P isomerization activity.

Homodimer.

It localises to the cytoplasm. It catalyses the reaction D-fructose 6-phosphate + L-glutamine = D-glucosamine 6-phosphate + L-glutamate. Its function is as follows. Catalyzes the first step in hexosamine metabolism, converting fructose-6P into glucosamine-6P using glutamine as a nitrogen source. The polypeptide is Glutamine--fructose-6-phosphate aminotransferase [isomerizing] (Idiomarina loihiensis (strain ATCC BAA-735 / DSM 15497 / L2-TR)).